The primary structure comprises 325 residues: Lipoyl synthase (325 aa).

The tract at residues 1–31 (MASDSDLLDTKPAETRHPEKAHRPDQPTLRK) is disordered. Residues 8 to 31 (LDTKPAETRHPEKAHRPDQPTLRK) show a composition bias toward basic and acidic residues. The [4Fe-4S] cluster site is built by cysteine 61, cysteine 66, cysteine 72, cysteine 87, cysteine 91, cysteine 94, and serine 300. In terms of domain architecture, Radical SAM core spans 73–289 (WAKKHATFMI…AEIGRAKGFL (217 aa)).

This sequence belongs to the radical SAM superfamily. Lipoyl synthase family. Requires [4Fe-4S] cluster as cofactor.

It localises to the cytoplasm. It catalyses the reaction [[Fe-S] cluster scaffold protein carrying a second [4Fe-4S](2+) cluster] + N(6)-octanoyl-L-lysyl-[protein] + 2 oxidized [2Fe-2S]-[ferredoxin] + 2 S-adenosyl-L-methionine + 4 H(+) = [[Fe-S] cluster scaffold protein] + N(6)-[(R)-dihydrolipoyl]-L-lysyl-[protein] + 4 Fe(3+) + 2 hydrogen sulfide + 2 5'-deoxyadenosine + 2 L-methionine + 2 reduced [2Fe-2S]-[ferredoxin]. It functions in the pathway protein modification; protein lipoylation via endogenous pathway; protein N(6)-(lipoyl)lysine from octanoyl-[acyl-carrier-protein]: step 2/2. Catalyzes the radical-mediated insertion of two sulfur atoms into the C-6 and C-8 positions of the octanoyl moiety bound to the lipoyl domains of lipoate-dependent enzymes, thereby converting the octanoylated domains into lipoylated derivatives. The chain is Lipoyl synthase from Methylocella silvestris (strain DSM 15510 / CIP 108128 / LMG 27833 / NCIMB 13906 / BL2).